A 137-amino-acid chain; its full sequence is Small ribosomal subunit protein bS6 (137 aa).

This sequence belongs to the bacterial ribosomal protein bS6 family.

Its function is as follows. Binds together with bS18 to 16S ribosomal RNA. In Mycoplasma mycoides subsp. mycoides SC (strain CCUG 32753 / NCTC 10114 / PG1), this protein is Small ribosomal subunit protein bS6.